Here is a 752-residue protein sequence, read N- to C-terminus: Photosystem I P700 chlorophyll a apoprotein A1 (752 aa).

Helical transmembrane passes span 73–96 (IFSA…FHGA), 159–182 (LYCT…FHYH), 198–222 (MNHH…HLSL), 294–312 (TAHH…GHMY), 349–372 (WHAQ…HHMY), 388–414 (LSLF…IFMV), 436–458 (AIVS…LYIH), and 533–551 (FMVH…LILV). Residues Cys575 and Cys584 each coordinate [4Fe-4S] cluster. The next 2 membrane-spanning stretches (helical) occupy residues 591 to 612 (HVFL…HFSW) and 666 to 688 (LSAY…MFLF). His677 serves as a coordination point for chlorophyll a'. Chlorophyll a contacts are provided by Met685 and Tyr693. Trp694 is a binding site for phylloquinone. A helical transmembrane segment spans residues 726 to 746 (AVGVAHYLLGGIGTTWAFFLA).

The protein belongs to the PsaA/PsaB family. The PsaA/B heterodimer binds the P700 chlorophyll special pair and subsequent electron acceptors. PSI consists of a core antenna complex that captures photons, and an electron transfer chain that converts photonic excitation into a charge separation. The eukaryotic PSI reaction center is composed of at least 11 subunits. Requires P700 is a chlorophyll a/chlorophyll a' dimer, A0 is one or more chlorophyll a, A1 is one or both phylloquinones and FX is a shared 4Fe-4S iron-sulfur center. as cofactor.

It is found in the plastid. The protein resides in the chloroplast thylakoid membrane. The enzyme catalyses reduced [plastocyanin] + hnu + oxidized [2Fe-2S]-[ferredoxin] = oxidized [plastocyanin] + reduced [2Fe-2S]-[ferredoxin]. PsaA and PsaB bind P700, the primary electron donor of photosystem I (PSI), as well as the electron acceptors A0, A1 and FX. PSI is a plastocyanin/cytochrome c6-ferredoxin oxidoreductase, converting photonic excitation into a charge separation, which transfers an electron from the donor P700 chlorophyll pair to the spectroscopically characterized acceptors A0, A1, FX, FA and FB in turn. Oxidized P700 is reduced on the lumenal side of the thylakoid membrane by plastocyanin or cytochrome c6. This is Photosystem I P700 chlorophyll a apoprotein A1 from Porphyra purpurea (Red seaweed).